Here is a 43-residue protein sequence, read N- to C-terminus: uncharacterized protein (43 aa).

Residues 1-22 form the signal peptide; that stretch reads MKRKIIAIGIFFRLFIIHIHFS.

This is an uncharacterized protein from Schizosaccharomyces pombe (strain 972 / ATCC 24843) (Fission yeast).